Here is a 147-residue protein sequence, read N- to C-terminus: Transthyretin (147 aa).

An N-terminal signal peptide occupies residues 1 to 20; that stretch reads MASHRLLLLCLAGLVFVSEA. Sulfocysteine is present on Cys30. Lys35 contributes to the L-thyroxine binding site. Glu62 carries the post-translational modification 4-carboxyglutamate; in a patient with Moyamoya disease. Position 72 is a phosphoserine (Ser72). Glu74 serves as a coordination point for L-thyroxine. A glycan (N-linked (GlcNAc...) asparagine) is linked at Asn118. L-thyroxine is bound at residue Ser137.

Belongs to the transthyretin family. Homotetramer. Dimer of dimers. In the homotetramer, subunits assemble around a central channel that can accommodate two ligand molecules. Interacts with RBP4. Not glycosylated under normal conditions. Following unfolding, caused for example by variant AMYLD1 'Gly-38', the cryptic Asn-118 site is exposed and glycosylated by STT3B-containing OST complex, leading to its degradation by the ER-associated degradation (ERAD) pathway. Post-translationally, sulfonation of the reactive cysteine Cys-30 enhances the stability of the native conformation of TTR, avoiding misassembly of the protein leading to amyloid formation. In terms of tissue distribution, detected in serum and cerebrospinal fluid (at protein level). Highly expressed in choroid plexus epithelial cells. Detected in retina pigment epithelium and liver.

The protein resides in the secreted. It is found in the cytoplasm. Functionally, thyroid hormone-binding protein. Probably transports thyroxine from the bloodstream to the brain. The protein is Transthyretin (TTR) of Homo sapiens (Human).